Here is a 1340-residue protein sequence, read N- to C-terminus: Early transcription factor large subunit homolog (1340 aa).

It localises to the virion. Putative initation factor. The protein is Early transcription factor large subunit homolog of Ornithodoros (relapsing fever ticks).